The primary structure comprises 298 residues: Mitochondrial 2-oxodicarboxylate carrier (298 aa).

3 Solcar repeats span residues 10-99 (HETS…YKKF), 106-195 (SPGL…VKNI), and 204-293 (LEFL…TYAW). The next 6 helical transmembrane spans lie at 16–36 (VAAG…LDVV), 69–88 (FGFY…KRAV), 112–132 (LIAG…FEVV), 166–186 (GLNK…MVYF), 204–224 (LEFL…SVFN), and 276–296 (LGPG…WLQE).

This sequence belongs to the mitochondrial carrier (TC 2.A.29) family.

The protein localises to the mitochondrion inner membrane. The enzyme catalyses 2-oxoadipate(in) + 2-oxoglutarate(out) = 2-oxoadipate(out) + 2-oxoglutarate(in). It carries out the reaction hexanedioate(in) + 2-oxoglutarate(out) = hexanedioate(out) + 2-oxoglutarate(in). It catalyses the reaction L-2-aminoadipate(in) + 2-oxoglutarate(out) = L-2-aminoadipate(out) + 2-oxoglutarate(in). The catalysed reaction is glutarate(in) + 2-oxoglutarate(out) = glutarate(out) + 2-oxoglutarate(in). The enzyme catalyses 2-oxoheptanedioate(in) + 2-oxoglutarate(out) = 2-oxoheptanedioate(out) + 2-oxoglutarate(in). It carries out the reaction heptanedioate(in) + 2-oxoglutarate(out) = heptanedioate(out) + 2-oxoglutarate(in). It catalyses the reaction citrate(in) + 2-oxoglutarate(out) = citrate(out) + 2-oxoglutarate(in). Its function is as follows. Transports dicarboxylates across the inner membranes of mitochondria by a counter-exchange mechanism. Can transport 2-oxoadipate (2-oxohexanedioate), 2-oxoglutarate, adipate (hexanedioate), glutarate, and to a lesser extent, pimelate (heptanedioate), 2-oxopimelate (2-oxoheptanedioate), 2-aminoadipate (2-aminohexanedioate), oxaloacetate, and citrate. Plays a central role in catabolism of lysine, hydroxylysine, and tryptophan, by transporting common metabolite intermediates (such as 2-oxoadipate) into the mitochondria, where it is converted into acetyl-CoA and can enter the citric acid (TCA) cycle. This Mus musculus (Mouse) protein is Mitochondrial 2-oxodicarboxylate carrier (Slc25a21).